A 502-amino-acid chain; its full sequence is MLSILFDDPARTSSGALLIVGILLLRWALWPAPSSHWPLVNGKRWFEITTTKSKDRFVANGKDILLSSFKRLSKGFRLGTDNGPMIILSPEYVDEFRSEDRLCPVKFQAELAHTHLPGFEILSDKHVPKSVFTDFILRKLTPAIDSTAPASVTRLREALESTWTNSSEWHQIDLHSSVQVLSHTTTSPIFVGPELSSSKAWEELTYRYVGNFPVVACSLRLWPKFSQRFVNMILPSCTSLRKDVNQARQMVNEVLQKRAASQAARISQGLEPEKFSDGLQWWQELSGPPCDPACLQLALIFSAVHSTVDLLSQTILNLAERPELVDELRQEIIAVRESQPWGKAAFYKLGLMDSVLKETQRLKPVSIATEDVTFSDGLVIPKGSLVMMSCHNMREDSVTYPNPLEFDGHRFRKMRESPTNGAMAHLVSSSQHHMGFGIGTHSCPGRFFIAAGLKLTLSQILLNYDLRLSDPSENVTQNQGLFLMPNFKAKVEVRRREPEIEL.

The chain crosses the membrane as a helical span at residues 14-30 (SGALLIVGILLLRWALW). Asparagine 165 is a glycosylation site (N-linked (GlcNAc...) asparagine). A heme-binding site is contributed by cysteine 443. A glycan (N-linked (GlcNAc...) asparagine) is linked at asparagine 474.

It belongs to the cytochrome P450 family. Requires heme as cofactor.

The protein resides in the membrane. It participates in secondary metabolite biosynthesis; terpenoid biosynthesis. Functionally, cytochrome P450 monooxygenase; part of the gene cluster that mediates the biosynthesis of paraherquonin, a meroterpenoid with a unique, highly congested hexacyclic molecular architecture. The first step of the pathway is the synthesis of 3,5-dimethylorsellinic acid (DMOA) by the polyketide synthase prhL. Synthesis of DMOA is followed by farnesylation by the prenyltransferase prhE, methylesterification by the methyl-transferase prhM, epoxidation of the prenyl chain by the flavin-dependent monooxygenase prhF, and cyclization of the farnesyl moiety by the terpene cyclase prhH, to yield the tetracyclic intermediate, protoaustinoid A. The short chain dehydrogenase prhI then oxidizes the C-3 alcohol group of the terpene cyclase product to transform protoaustinoid A into protoaustinoid B. The FAD-binding monooxygenase prhJ catalyzes the oxidation of protoaustinoid B into preaustinoid A which is further oxidized into preaustinoid A1 by FAD-binding monooxygenase phrK. Finally, prhA leads to berkeleydione via the berkeleyone B intermediate. PrhA is a multifunctional dioxygenase that first desaturates at C5-C6 to form berkeleyone B, followed by rearrangement of the A/B-ring to form the cycloheptadiene moiety in berkeleydione. Berkeleydione serves as the key intermediate for the biosynthesis of paraherquonin as well as many other meroterpenoids. The cytochrome P450 monooxygenases prhB, prhD, and prhN, as well as the isomerase prhC, are probably involved in the late stage of paraherquonin biosynthesis, after the production of berkeleydione. Especially prhC might be a multifunctional enzyme that catalyzes the D-ring expansion via intramolecular methoxy rearrangement, as well as the hydrolysis of the expanded D-ring. The sequence is that of Cytochrome P450 monooxygenase prhN from Penicillium brasilianum.